The primary structure comprises 198 residues: Anthranilate synthase component 2 (198 aa).

Positions 1 to 194 (MILIIDNYDS…VNQVNENKES (194 aa)) constitute a Glutamine amidotransferase type-1 domain. 50 to 52 (GPG) provides a ligand contact to L-glutamine. Cys77 functions as the Nucleophile; for GATase activity in the catalytic mechanism. L-glutamine contacts are provided by residues Gln81 and 128-129 (SI). Residues His168 and Glu170 each act as for GATase activity in the active site.

In terms of assembly, heterotetramer consisting of two non-identical subunits: a beta subunit (TrpG) and a large alpha subunit (TrpE).

The catalysed reaction is chorismate + L-glutamine = anthranilate + pyruvate + L-glutamate + H(+). It participates in amino-acid biosynthesis; L-tryptophan biosynthesis; L-tryptophan from chorismate: step 1/5. Its function is as follows. Part of a heterotetrameric complex that catalyzes the two-step biosynthesis of anthranilate, an intermediate in the biosynthesis of L-tryptophan. In the first step, the glutamine-binding beta subunit (TrpG) of anthranilate synthase (AS) provides the glutamine amidotransferase activity which generates ammonia as a substrate that, along with chorismate, is used in the second step, catalyzed by the large alpha subunit of AS (TrpE) to produce anthranilate. In the absence of TrpG, TrpE can synthesize anthranilate directly from chorismate and high concentrations of ammonia. The protein is Anthranilate synthase component 2 (trpG) of Lactococcus lactis subsp. lactis (strain IL1403) (Streptococcus lactis).